Consider the following 236-residue polypeptide: Ribose-5-phosphate isomerase A 2 (236 aa).

Residues 31–34 (SGTT), 86–89 (DGPD), and 99–102 (KGGG) contribute to the substrate site. The active-site Proton acceptor is Glu-108. Residue Lys-126 participates in substrate binding.

Belongs to the ribose 5-phosphate isomerase family. In terms of assembly, homodimer.

The catalysed reaction is aldehydo-D-ribose 5-phosphate = D-ribulose 5-phosphate. It participates in carbohydrate degradation; pentose phosphate pathway; D-ribose 5-phosphate from D-ribulose 5-phosphate (non-oxidative stage): step 1/1. Catalyzes the reversible conversion of ribose-5-phosphate to ribulose 5-phosphate. The polypeptide is Ribose-5-phosphate isomerase A 2 (Yersinia pestis).